Consider the following 990-residue polypeptide: Type III restriction-modification enzyme StyLTI Res subunit (990 aa).

A helicase-like domain region spans residues 50–545; the sequence is NIDVKMETGT…GLRLPVDENG (496 aa). The VRR-NUC domain occupies 884–970; that stretch reads LLKYDYPQQV…RQNINVEFAE (87 aa). An endonuclease domain region spans residues 913-937; sequence STTPDFVYRIERQDADSVYLLVETK.

It belongs to the type III restriction-modification system Res protein family. Contains two different subunits: Res and Mod. The cofactor is Mg(2+). S-adenosyl-L-methionine serves as cofactor.

It catalyses the reaction Endonucleolytic cleavage of DNA to give specific double-stranded fragments with terminal 5'-phosphates.. In terms of biological role, a type III restriction enzyme that recognizes 2 inversely oriented double-stranded sequences 5'-CAGAG-3' and cleaves DNA 25-27 base pairs downstream. After binding to one recognition site undergoes random one-dimensional diffusion along DNA until it collides with a stationary enzyme bound to the second DNA site, which is when DNA cleavage occurs. DNA restriction requires both the Res and Mod subunits. This is Type III restriction-modification enzyme StyLTI Res subunit from Salmonella typhimurium (strain LT2 / SGSC1412 / ATCC 700720).